Reading from the N-terminus, the 114-residue chain is Lymphotactin (114 aa).

A signal peptide spans 1 to 21 (MRLLILALLGICSLTAYIVEG). The cysteines at positions 32 and 69 are disulfide-linked. The disordered stretch occupies residues 91 to 114 (RNNMIQTKPTGTQQSTNTAVTLTG).

Belongs to the intercrine gamma family. In terms of tissue distribution, highest level in spleen, lower in peripheral leukocytes and very low levels in lung, colon and small intestine.

The protein resides in the secreted. Functionally, chemotactic activity for lymphocytes but not for monocytes or neutrophils. In thymus, mediates medullary accumulation of thymic dendritic cells and contributes to regulatoy T cell development, playing a role in self-tolerance establishment. This is Lymphotactin (XCL1) from Homo sapiens (Human).